The sequence spans 61 residues: Sec-independent protein translocase protein TatA (61 aa).

Residues 1–21 (MFGIGMPEMLIILVIILIIFG) traverse the membrane as a helical segment.

This sequence belongs to the TatA/E family. In terms of assembly, the Tat system comprises two distinct complexes: a TatABC complex, containing multiple copies of TatA, TatB and TatC subunits, and a separate TatA complex, containing only TatA subunits. Substrates initially bind to the TatABC complex, which probably triggers association of the separate TatA complex to form the active translocon.

The protein resides in the cell inner membrane. In terms of biological role, part of the twin-arginine translocation (Tat) system that transports large folded proteins containing a characteristic twin-arginine motif in their signal peptide across membranes. TatA could form the protein-conducting channel of the Tat system. This is Sec-independent protein translocase protein TatA from Syntrophus aciditrophicus (strain SB).